The sequence spans 128 residues: Fluoride-specific ion channel FluC (128 aa).

Transmembrane regions (helical) follow at residues 3–23 (FTTI…RSFT), 34–54 (LSFP…IGFL), 65–85 (INLK…FSTF), and 102–122 (FLNI…GFWI). Na(+) contacts are provided by glycine 77 and threonine 80.

Belongs to the fluoride channel Fluc/FEX (TC 1.A.43) family.

It localises to the cell inner membrane. It catalyses the reaction fluoride(in) = fluoride(out). Its activity is regulated as follows. Na(+) is not transported, but it plays an essential structural role and its presence is essential for fluoride channel function. In terms of biological role, fluoride-specific ion channel. Important for reducing fluoride concentration in the cell, thus reducing its toxicity. This Campylobacter fetus subsp. fetus (strain 82-40) protein is Fluoride-specific ion channel FluC.